Consider the following 88-residue polypeptide: Large ribosomal subunit protein bL27 (88 aa).

The interval 1–21 is disordered; the sequence is MAHKKGQGSTQNNRDSAGRRL.

It belongs to the bacterial ribosomal protein bL27 family.

This Helicobacter pylori (strain P12) protein is Large ribosomal subunit protein bL27.